Here is a 295-residue protein sequence, read N- to C-terminus: RNA polymerase sigma factor RpoH (295 aa).

Residues 52 to 121 are sigma-70 factor domain-2; it reads MVTSHLRLVA…IQEYILRSWS (70 aa). The short motif at 76-79 is the Interaction with polymerase core subunit RpoC element; it reads EVIS. The interval 230–281 is sigma-70 factor domain-4; it reads AMVELTDRERHILTERRLKDDPTTLEELAAQYGVSRERVRQIEVRAFEKLQK. A DNA-binding region (H-T-H motif) is located at residues 254–273; sequence LEELAAQYGVSRERVRQIEV.

It belongs to the sigma-70 factor family. RpoH subfamily. Interacts with the RNA polymerase core enzyme.

Its subcellular location is the cytoplasm. In terms of biological role, sigma factors are initiation factors that promote the attachment of RNA polymerase to specific initiation sites and are then released. This sigma factor is involved in regulation of expression of heat shock genes. This chain is RNA polymerase sigma factor RpoH, found in Caulobacter vibrioides (strain ATCC 19089 / CIP 103742 / CB 15) (Caulobacter crescentus).